Consider the following 361-residue polypeptide: Histidinol-phosphate aminotransferase (361 aa).

The residue at position 219 (K219) is an N6-(pyridoxal phosphate)lysine.

This sequence belongs to the class-II pyridoxal-phosphate-dependent aminotransferase family. Histidinol-phosphate aminotransferase subfamily. In terms of assembly, homodimer. It depends on pyridoxal 5'-phosphate as a cofactor.

The enzyme catalyses L-histidinol phosphate + 2-oxoglutarate = 3-(imidazol-4-yl)-2-oxopropyl phosphate + L-glutamate. It participates in amino-acid biosynthesis; L-histidine biosynthesis; L-histidine from 5-phospho-alpha-D-ribose 1-diphosphate: step 7/9. This is Histidinol-phosphate aminotransferase from Cereibacter sphaeroides (strain KD131 / KCTC 12085) (Rhodobacter sphaeroides).